A 121-amino-acid chain; its full sequence is Large ribosomal subunit protein uL18 (121 aa).

The protein belongs to the universal ribosomal protein uL18 family. As to quaternary structure, part of the 50S ribosomal subunit; part of the 5S rRNA/L5/L18/L25 subcomplex. Contacts the 5S and 23S rRNAs.

This is one of the proteins that bind and probably mediate the attachment of the 5S RNA into the large ribosomal subunit, where it forms part of the central protuberance. The sequence is that of Large ribosomal subunit protein uL18 from Geobacter metallireducens (strain ATCC 53774 / DSM 7210 / GS-15).